Consider the following 216-residue polypeptide: Phosphoenolpyruvate guanylyltransferase (216 aa).

Positions 139, 155, and 158 each coordinate phosphoenolpyruvate.

This sequence belongs to the CofC family.

The catalysed reaction is phosphoenolpyruvate + GTP + H(+) = enolpyruvoyl-2-diphospho-5'-guanosine + diphosphate. It participates in cofactor biosynthesis; coenzyme F420 biosynthesis. Functionally, guanylyltransferase that catalyzes the activation of phosphoenolpyruvate (PEP) as enolpyruvoyl-2-diphospho-5'-guanosine, via the condensation of PEP with GTP. It is involved in the biosynthesis of coenzyme F420, a hydride carrier cofactor. In Streptomyces avermitilis (strain ATCC 31267 / DSM 46492 / JCM 5070 / NBRC 14893 / NCIMB 12804 / NRRL 8165 / MA-4680), this protein is Phosphoenolpyruvate guanylyltransferase.